We begin with the raw amino-acid sequence, 154 residues long: Large ribosomal subunit protein uL13 (154 aa).

The protein belongs to the universal ribosomal protein uL13 family. In terms of assembly, part of the 50S ribosomal subunit.

This protein is one of the early assembly proteins of the 50S ribosomal subunit, although it is not seen to bind rRNA by itself. It is important during the early stages of 50S assembly. This is Large ribosomal subunit protein uL13 from Brucella canis (strain ATCC 23365 / NCTC 10854 / RM-666).